We begin with the raw amino-acid sequence, 607 residues long: UvrABC system protein C (607 aa).

The region spanning Ser15–Ile92 is the GIY-YIG domain. The UVR domain maps to Gly197–Thr232.

This sequence belongs to the UvrC family. Interacts with UvrB in an incision complex.

It is found in the cytoplasm. The UvrABC repair system catalyzes the recognition and processing of DNA lesions. UvrC both incises the 5' and 3' sides of the lesion. The N-terminal half is responsible for the 3' incision and the C-terminal half is responsible for the 5' incision. The chain is UvrABC system protein C from Oenococcus oeni (strain ATCC BAA-331 / PSU-1).